The sequence spans 447 residues: Probable protein phosphatase 2C 71 (447 aa).

Residues 33 to 279 (SYGYASSAGK…DNITCVVVRF (247 aa)) form the PPM-type phosphatase domain. Mn(2+) is bound by residues aspartate 69, glycine 70, aspartate 231, and aspartate 270. Over residues 284 to 297 (SANNNGSSSSEEAN) the composition is skewed to low complexity. A disordered region spans residues 284-447 (SANNNGSSSS…ARKTTPSIFN (164 aa)). A compositionally biased stretch (basic and acidic residues) spans 305–331 (NDSDHKISAKETNQDHTTVNKDLDRNT). 2 stretches are compositionally biased toward polar residues: residues 346 to 374 (ADNS…TGEK) and 392 to 423 (KVPN…GSTG). A compositionally biased stretch (basic and acidic residues) spans 424 to 438 (ERNRKPIKVHSDSAA).

The protein belongs to the PP2C family. It depends on Mg(2+) as a cofactor. Mn(2+) is required as a cofactor.

It carries out the reaction O-phospho-L-seryl-[protein] + H2O = L-seryl-[protein] + phosphate. The enzyme catalyses O-phospho-L-threonyl-[protein] + H2O = L-threonyl-[protein] + phosphate. The chain is Probable protein phosphatase 2C 71 from Arabidopsis thaliana (Mouse-ear cress).